The primary structure comprises 137 residues: Large-conductance mechanosensitive channel (137 aa).

2 helical membrane-spanning segments follow: residues 10–30 and 76–96; these read FAMRGNVVDLAVGVIIGAAFG and GVFIQNVFDFLIVAFAIFMAI.

Belongs to the MscL family. Homopentamer.

It localises to the cell inner membrane. Functionally, channel that opens in response to stretch forces in the membrane lipid bilayer. May participate in the regulation of osmotic pressure changes within the cell. This Escherichia coli O45:K1 (strain S88 / ExPEC) protein is Large-conductance mechanosensitive channel.